The sequence spans 296 residues: 5,10-methylenetetrahydrofolate reductase (296 aa).

Catalysis depends on Glu-28, which acts as the Proton donor/acceptor. Thr-59 is an NADH binding site. 14 residues coordinate FAD: Tyr-60, Ala-62, His-88, Arg-118, Gly-119, Asp-120, Ala-132, Tyr-152, His-156, Ala-159, Asp-165, Asn-168, Arg-171, and Lys-172. Asp-120 is a binding site for (6S)-5-methyl-5,6,7,8-tetrahydrofolate. Position 183 (Gln-183) interacts with NADH. Residues Gln-183, Gln-219, and Arg-279 each coordinate (6S)-5-methyl-5,6,7,8-tetrahydrofolate.

This sequence belongs to the methylenetetrahydrofolate reductase family. As to quaternary structure, homotetramer. FAD is required as a cofactor.

It catalyses the reaction (6S)-5-methyl-5,6,7,8-tetrahydrofolate + NAD(+) = (6R)-5,10-methylene-5,6,7,8-tetrahydrofolate + NADH + H(+). Its pathway is one-carbon metabolism; tetrahydrofolate interconversion. It functions in the pathway amino-acid biosynthesis; L-methionine biosynthesis via de novo pathway. Functionally, catalyzes the NADH-dependent reduction of 5,10-methylenetetrahydrofolate to 5-methyltetrahydrofolate. Is required to provide the methyl group necessary for methionine synthetase to convert homocysteine to methionine; the methyl group is given by 5-methyltetrahydrofolate. Can also use NADPH as the reductant, but much less effectively than NADH. The protein is 5,10-methylenetetrahydrofolate reductase of Escherichia coli (strain K12).